A 255-amino-acid polypeptide reads, in one-letter code: Reticulon-like protein B3 (255 aa).

Basic and acidic residues predominate over residues 1 to 25; that stretch reads MAEEHKHEESIMEKISEKIHGHDDS. The disordered stretch occupies residues 1-38; sequence MAEEHKHEESIMEKISEKIHGHDDSSSSSSDSDDDKNS. The residue at position 2 (alanine 2) is an N-acetylalanine. A Reticulon domain is found at 64–255; the sequence is PADIFLWRNK…GAFAFIKKKD (192 aa). 3 helical membrane-spanning segments follow: residues 75–95, 97–117, and 186–206; these read VSGG…LLEY, LLTL…LWSS, and CNFL…PVLY.

The protein resides in the endoplasmic reticulum membrane. Its subcellular location is the vacuole membrane. The polypeptide is Reticulon-like protein B3 (RTNLB3) (Arabidopsis thaliana (Mouse-ear cress)).